A 360-amino-acid polypeptide reads, in one-letter code: Phosphoserine aminotransferase (360 aa).

Arg-41 lines the L-glutamate pocket. Pyridoxal 5'-phosphate is bound by residues 75 to 76, Trp-101, Thr-151, Asp-171, and Gln-194; that span reads AS. An N6-(pyridoxal phosphate)lysine modification is found at Lys-195. Pyridoxal 5'-phosphate is bound at residue 236 to 237; sequence NT.

The protein belongs to the class-V pyridoxal-phosphate-dependent aminotransferase family. SerC subfamily. Homodimer. Pyridoxal 5'-phosphate is required as a cofactor.

The protein localises to the cytoplasm. The enzyme catalyses O-phospho-L-serine + 2-oxoglutarate = 3-phosphooxypyruvate + L-glutamate. It catalyses the reaction 4-(phosphooxy)-L-threonine + 2-oxoglutarate = (R)-3-hydroxy-2-oxo-4-phosphooxybutanoate + L-glutamate. It participates in amino-acid biosynthesis; L-serine biosynthesis; L-serine from 3-phospho-D-glycerate: step 2/3. It functions in the pathway cofactor biosynthesis; pyridoxine 5'-phosphate biosynthesis; pyridoxine 5'-phosphate from D-erythrose 4-phosphate: step 3/5. Its function is as follows. Catalyzes the reversible conversion of 3-phosphohydroxypyruvate to phosphoserine and of 3-hydroxy-2-oxo-4-phosphonooxybutanoate to phosphohydroxythreonine. This Herpetosiphon aurantiacus (strain ATCC 23779 / DSM 785 / 114-95) protein is Phosphoserine aminotransferase.